We begin with the raw amino-acid sequence, 464 residues long: MMITLILFTTGIVMTTLVIPQNKLWANAISQSALLSLSSPLLIFSNHWSAPWHNLSNILASDSISAPLIALSCWLAPISLIASNNTISKQSELNQRTFIIIVIFIAGALIITFSALELLLFYVAFETTLIPTLILITRWGAQMERFQAGLYFMFYTLFGSLPLLISLIAIYISSSSLSIPNVELIWTPSETMETLNIWWALSIIAFLIKMPIYGFHLWLPKAHVEAPVAGSMILAAILLKLGGYGLIRLINLFATISLNSLSLALITFCSWGALVTSIICVRQTDLKALIAYSSVGHMSIVAAAIFSSTNWGTNGALILMIAYGLVSSDLFSLANTVYERSGTRTLAITRGLKTILPLSTLWWLVMSAANLGLPPSPNLIGEILILSSLIAWSIWLFPIIGLATIFGAIYSLMIFQLSQQGTPTNNINNISLSFSREHLLATLHTLPLILIIINPISALITWLK.

Helical transmembrane passes span 1-21, 63-83, 98-118, 119-139, 152-172, 197-217, 227-247, 261-281, 288-308, 314-334, 355-375, 389-409, and 443-463; these read MMIT…VIPQ, SISA…LIAS, FIII…ALEL, LLFY…ITRW, FMFY…AIYI, IWWA…GFHL, PVAG…YGLI, LSLA…IICV, ALIA…IFSS, NGAL…FSLA, ILPL…GLPP, LIAW…FGAI, and LHTL…ITWL.

The protein belongs to the complex I subunit 4 family.

The protein resides in the mitochondrion membrane. It carries out the reaction a ubiquinone + NADH + 5 H(+)(in) = a ubiquinol + NAD(+) + 4 H(+)(out). In terms of biological role, core subunit of the mitochondrial membrane respiratory chain NADH dehydrogenase (Complex I) that is believed to belong to the minimal assembly required for catalysis. Complex I functions in the transfer of electrons from NADH to the respiratory chain. The immediate electron acceptor for the enzyme is believed to be ubiquinone. The protein is NADH-ubiquinone oxidoreductase chain 4 (ND4) of Paracentrotus lividus (Common sea urchin).